Here is a 613-residue protein sequence, read N- to C-terminus: Pentatricopeptide repeat-containing protein At2g45350, chloroplastic (613 aa).

13 PPR repeats span residues 85–119 (DPFL…GVSV), 120–154 (DKFS…GLWS), 155–185 (DLFL…MPKR), 186–216 (DSVS…MPME), 219–250 (NLIS…MPEK), 251–285 (DLIS…DVVT), 286–312 (WATM…MPHR), 313–347 (DVVA…SHLL), 349–383 (DDTT…QFYL), 384–414 (GGKL…IENK), 415–449 (SIDH…SLKP), 450–480 (DDIT…MRRK), and 486–516 (RLQH…MPVE). The type E motif stretch occupies residues 521-596 (IWRTFLTACS…IPGCSWIELD (76 aa)).

The protein belongs to the PPR family. PCMP-E subfamily. As to quaternary structure, interacts with DYW1.

The protein localises to the plastid. It localises to the chloroplast. Its function is as follows. Plays a major role in chloroplast RNA editing. Acts as a site-recognition transacting factor to recruit C-deaminase. Involved in single RNA editing events. Required for the edition of the site 1 of ndhD (ndhD-1 site corresponding to cytidine-2), which is a plastid-encoded subunit of the NADH-plastoquinone oxidoreductase. The interaction with DYW1 is required for its function in editing the ndhD-1 site. This chain is Pentatricopeptide repeat-containing protein At2g45350, chloroplastic (CRR4), found in Arabidopsis thaliana (Mouse-ear cress).